A 138-amino-acid chain; its full sequence is Probable lactoylglutathione lyase (138 aa).

A VOC domain is found at 5-129; it reads RILHTMLRVG…DGYMIELIQN (125 aa). Residue His-8 participates in Ni(2+) binding. A substrate-binding site is contributed by Arg-12. Glu-59 contacts Ni(2+). Substrate contacts are provided by Asn-63 and His-77. The Ni(2+) site is built by His-77 and Glu-125. The active-site Proton donor/acceptor is Glu-125.

This sequence belongs to the glyoxalase I family. Ni(2+) serves as cofactor.

It catalyses the reaction (R)-S-lactoylglutathione = methylglyoxal + glutathione. The protein operates within secondary metabolite metabolism; methylglyoxal degradation; (R)-lactate from methylglyoxal: step 1/2. Functionally, catalyzes the conversion of hemimercaptal, formed from methylglyoxal and glutathione, to S-lactoylglutathione. This Vibrio cholerae serotype O1 (strain ATCC 39315 / El Tor Inaba N16961) protein is Probable lactoylglutathione lyase (gloA).